A 301-amino-acid chain; its full sequence is Mating type protein mtA-1 (301 aa).

Residues 49-104 (APKKKVNGFMGFRSYYSSLFSQFPQKARSPFMTILWQHDPFHNEWDFMCSVYSSIR) constitute a DNA-binding region (alpha box).

Belongs to the MATALPHA1 family.

Its subcellular location is the nucleus. Functionally, mating type proteins are sequence specific DNA-binding proteins that act as master switches in fungal differentiation by controlling gene expression in a cell type-specific fashion. Transcriptional activator that induces the transcription of alpha-specific genes. The sequence is that of Mating type protein mtA-1 (MTA1) from Sordaria fimicola.